A 262-amino-acid chain; its full sequence is Zinc import ATP-binding protein ZnuC (262 aa).

In terms of domain architecture, ABC transporter spans 5 to 220; that stretch reads VSLEQLCVEF…PSYIALFGNA (216 aa). 37–44 is an ATP binding site; that stretch reads GPNGAGKS. The tract at residues 236-262 is disordered; sequence HHDLSGSPVSGDATSCSNHNHGHHHHD.

It belongs to the ABC transporter superfamily. Zinc importer (TC 3.A.1.15.5) family. In terms of assembly, the complex is composed of two ATP-binding proteins (ZnuC), two transmembrane proteins (ZnuB) and a solute-binding protein (ZnuA).

The protein resides in the cell inner membrane. It carries out the reaction Zn(2+)(out) + ATP(in) + H2O(in) = Zn(2+)(in) + ADP(in) + phosphate(in) + H(+)(in). Part of the ABC transporter complex ZnuABC involved in zinc import. Responsible for energy coupling to the transport system. The protein is Zinc import ATP-binding protein ZnuC of Vibrio parahaemolyticus serotype O3:K6 (strain RIMD 2210633).